Reading from the N-terminus, the 365-residue chain is UDP-N-acetylglucosamine--N-acetylmuramyl-(pentapeptide) pyrophosphoryl-undecaprenol N-acetylglucosamine transferase (365 aa).

Residues 17 to 19 (TGG), N129, R167, S194, I250, 269 to 274 (ALTVSE), and Q295 contribute to the UDP-N-acetyl-alpha-D-glucosamine site.

This sequence belongs to the glycosyltransferase 28 family. MurG subfamily.

Its subcellular location is the cell inner membrane. The catalysed reaction is di-trans,octa-cis-undecaprenyl diphospho-N-acetyl-alpha-D-muramoyl-L-alanyl-D-glutamyl-meso-2,6-diaminopimeloyl-D-alanyl-D-alanine + UDP-N-acetyl-alpha-D-glucosamine = di-trans,octa-cis-undecaprenyl diphospho-[N-acetyl-alpha-D-glucosaminyl-(1-&gt;4)]-N-acetyl-alpha-D-muramoyl-L-alanyl-D-glutamyl-meso-2,6-diaminopimeloyl-D-alanyl-D-alanine + UDP + H(+). It participates in cell wall biogenesis; peptidoglycan biosynthesis. Its function is as follows. Cell wall formation. Catalyzes the transfer of a GlcNAc subunit on undecaprenyl-pyrophosphoryl-MurNAc-pentapeptide (lipid intermediate I) to form undecaprenyl-pyrophosphoryl-MurNAc-(pentapeptide)GlcNAc (lipid intermediate II). This chain is UDP-N-acetylglucosamine--N-acetylmuramyl-(pentapeptide) pyrophosphoryl-undecaprenol N-acetylglucosamine transferase, found in Shewanella piezotolerans (strain WP3 / JCM 13877).